A 428-amino-acid chain; its full sequence is Probable mannosyltransferase YUR1 (428 aa).

At 1 to 3 the chain is on the cytoplasmic side; sequence MAK. Residues 4–24 traverse the membrane as a helical; Signal-anchor for type II membrane protein segment; it reads GGSLYIVGIFLPIWTFMIYIF. The segment at 25–88 is stem region; sequence GKELFLIRKY…TRQNDSDSFH (64 aa). Residues 25–428 lie on the Lumenal side of the membrane; that stretch reads GKELFLIRKY…YFLKEEQDEI (404 aa). Asn77, Asn82, Asn92, and Asn167 each carry an N-linked (GlcNAc...) asparagine glycan. Residues 89–428 form a catalytic region; the sequence is LRENATILML…YFLKEEQDEI (340 aa). The active-site Nucleophile is Glu313. Asn414 is a glycosylation site (N-linked (GlcNAc...) asparagine).

Belongs to the glycosyltransferase 15 family.

The protein resides in the golgi apparatus membrane. Its pathway is protein modification; protein glycosylation. Functionally, possible glycosyltransferase involved in N-linked glycosylation. Transfers an alpha-D-mannosyl residue from GDP-mannose into lipid-linked oligosaccharide, forming an alpha-(1-&gt;2)-D-mannosyl-D-mannose linkage. The polypeptide is Probable mannosyltransferase YUR1 (YUR1) (Saccharomyces cerevisiae (strain ATCC 204508 / S288c) (Baker's yeast)).